We begin with the raw amino-acid sequence, 103 residues long: Sperm-associated antigen 11A (103 aa).

Positions 1–24 (MRQRLLPSVTSLLLVALLFPGSSQ) are cleaved as a signal peptide. An N-linked (GlcNAc...) asparagine glycan is attached at Asn-29.

Belongs to the SPAG11 family.

Its subcellular location is the secreted. Has antimicrobial activity against E.coli. Plays a role in the defense response in the male reproductive tract, contributing to sperm maturation, storage and protection. The protein is Sperm-associated antigen 11A of Pan troglodytes (Chimpanzee).